The chain runs to 147 residues: UPF0260 protein CJA_2436 (147 aa).

Belongs to the UPF0260 family.

The chain is UPF0260 protein CJA_2436 from Cellvibrio japonicus (strain Ueda107) (Pseudomonas fluorescens subsp. cellulosa).